A 365-amino-acid polypeptide reads, in one-letter code: Probable 7-methylxanthine methyltransferase 3 (365 aa).

Tyrosine 18 provides a ligand contact to S-adenosyl-L-homocysteine. A theobromine-binding site is contributed by threonine 25. Positions 62, 67, 99, 100, 132, and 133 each coordinate S-adenosyl-L-homocysteine. Positions 150, 153, and 154 each coordinate theobromine. Mg(2+) is bound by residues asparagine 170, phenylalanine 258, and asparagine 259. Phenylalanine 311 provides a ligand contact to theobromine.

It belongs to the methyltransferase superfamily. Type-7 methyltransferase family. The cofactor is Mg(2+).

It catalyses the reaction 7-methylxanthine + S-adenosyl-L-methionine = theobromine + S-adenosyl-L-homocysteine + H(+). It participates in alkaloid biosynthesis. In terms of biological role, involved in the biosynthesis of theobromine. This is Probable 7-methylxanthine methyltransferase 3 from Theobroma cacao (Cacao).